The following is a 691-amino-acid chain: Solute carrier organic anion transporter family member 1B1 (691 aa).

Topologically, residues 1 to 28 (MDQNQHLNKTAEAQPSENKKTRYCNGLK) are cytoplasmic. Residues 29–48 (MFLAALSLSFIAKTLGAIIM) form a helical membrane-spanning segment. The Extracellular segment spans residues 49–67 (KSSIIHIERRFEISSSLVG). The chain crosses the membrane as a helical span at residues 68 to 88 (FIDGSFEIGNLLVIVFVSYFG). Over 89 to 94 (SKLHRP) the chain is Cytoplasmic. A helical membrane pass occupies residues 95–119 (KLIGIGCFIMGIGGVLTALPHFFMG). At 120 to 168 (YYRYSKETNINSSENSTSTLSTCLINQILSLNRASPEIVGKGCLKESGS) the chain is on the extracellular side. N130 and N134 each carry an N-linked (GlcNAc...) asparagine glycan. Residues 169 to 197 (YMWIYVFMGNMLRGIGETPIVPLGLSYID) traverse the membrane as a helical segment. Topologically, residues 198–216 (DFAKEGHSSLYLGILNAIA) are cytoplasmic. Residues 217–237 (MIGPIIGFTLGSLFSKMYVDI) form a helical membrane-spanning segment. Residues 238-255 (GYVDLSTIRITPTDSRWV) lie on the Extracellular side of the membrane. The chain crosses the membrane as a helical span at residues 256 to 280 (GAWWLNFLVSGLFSIISSIPFFFLP). Topologically, residues 281 to 331 (QTPNKPQKERKASLSLHVLETNDEKDQTANLTNQGKNITKNVTGFFQSFKS) are cytoplasmic. 2 positions are modified to phosphoserine: S293 and S295. A helical membrane pass occupies residues 332 to 353 (ILTNPLYVMFVLLTLLQVSSYI). Residues 354–373 (GAFTYVFKYVEQQYGQPSSK) lie on the Extracellular side of the membrane. A helical membrane pass occupies residues 374–397 (ANILLGVITIPIFASGMFLGGYII). Topologically, residues 398 to 401 (KKFK) are cytoplasmic. A helical membrane pass occupies residues 402–425 (LNTVGIAKFSCFTAVMSLSFYLLY). Residues 426–537 (FFILCENKSV…DACTRKFYFF (112 aa)) lie on the Extracellular side of the membrane. A glycan (N-linked (GlcNAc...) asparagine) is linked at N432. The 56-residue stretch at 453-508 (DVPLSYCNSDCNCDESQWEPVCGNNGITYISPCLAGCKSSSGNKKPIVFYNCSCLE) folds into the Kazal-like domain. 3 disulfide bridges follow: C459-C489, C465-C485, and C474-C506. N-linked (GlcNAc...) asparagine glycans are attached at residues N503 and N516. A helical membrane pass occupies residues 538-560 (VAIQVLNLFFSALGGTSHVMLIV). Residues 561–569 (KIVQPELKS) lie on the Cytoplasmic side of the membrane. Residues 570–595 (LALGFHSMVIRALGGILAPIYFGALI) traverse the membrane as a helical segment. Residues 596 to 629 (DTTCIKWSTNNCGTRGSCRTYNSTSFSRVYLGLS) are Extracellular-facing. A glycan (N-linked (GlcNAc...) asparagine) is linked at N617. Residues 630 to 647 (SMLRVSSLVLYIILIYAM) form a helical membrane-spanning segment. The Cytoplasmic portion of the chain corresponds to 648 to 691 (KKKYQEKDINASENGSVMDEANLESLNKNKHFVPSAGADSETHC). S672 and S682 each carry phosphoserine.

It belongs to the organo anion transporter (TC 2.A.60) family. Highly expressed in liver, at the basolateral membranes of centrilobular hepatocytes. Expressed in liver (at protein level). Expressed in fetal liver. Not detected in heart, brain, placenta, lung, skeletal muscle, kidney, pancreas, spleen, thymus, prostate, testis, ovary, small intestine, colon and leukocyte. In testis, primarily localized to the basal membrane of Sertoli cells and weakly expressed in Leydig cells and within the tubules.

The protein localises to the basolateral cell membrane. It is found in the basal cell membrane. The catalysed reaction is taurocholate(out) = taurocholate(in). It carries out the reaction dehydroepiandrosterone 3-sulfate(out) = dehydroepiandrosterone 3-sulfate(in). The enzyme catalyses estrone 3-sulfate(out) = estrone 3-sulfate(in). It catalyses the reaction 3,3',5'-triiodo-L-thyronine(out) = 3,3',5'-triiodo-L-thyronine(in). The catalysed reaction is L-thyroxine(out) = L-thyroxine(in). It carries out the reaction prostaglandin E2(out) = prostaglandin E2(in). The enzyme catalyses thromboxane B2(out) = thromboxane B2(in). It catalyses the reaction 17beta-estradiol 17-O-(beta-D-glucuronate)(out) = 17beta-estradiol 17-O-(beta-D-glucuronate)(in). The catalysed reaction is leukotriene C4(out) = leukotriene C4(in). It carries out the reaction leukotriene E4(out) = leukotriene E4(in). The enzyme catalyses (4E,15E)-bilirubin IXalpha C8-beta-D-glucuronoside(out) = (4E,15E)-bilirubin IXalpha C8-beta-D-glucuronoside(in). It catalyses the reaction bilirubin IXalpha bis-beta-D-glucuronoside(out) = bilirubin IXalpha bis-beta-D-glucuronoside(in). In terms of biological role, mediates the Na(+)-independent uptake of organic anions. Shows broad substrate specificity, can transport both organic anions such as bile acid taurocholate (cholyltaurine) and conjugated steroids (dehydroepiandrosterone 3-sulfate, 17-beta-glucuronosyl estradiol, and estrone 3-sulfate), as well as eicosanoids (prostaglandin E2, thromboxane B2, leukotriene C4, and leukotriene E4), and thyroid hormones (T4/L-thyroxine, and T3/3,3',5'-triiodo-L-thyronine). Can take up bilirubin glucuronides from plasma into the liver, contributing to the detoxification-enhancing liver-blood shuttling loop. Involved in the clearance of endogenous and exogenous substrates from the liver. Transports coproporphyrin I and III, by-products of heme synthesis, and may be involved in their hepatic disposition. May contribute to regulate the transport of organic compounds in testes across the blood-testis-barrier. Can transport HMG-CoA reductase inhibitors (also known as statins), such as pravastatin and pitavastatin, a clinically important class of hypolipidemic drugs. May play an important role in plasma and tissue distribution of the structurally diverse chemotherapeutic drug methotrexate. May also transport antihypertension agents, such as the angiotensin-converting enzyme (ACE) inhibitor prodrug enalapril, and the highly selective angiotensin II AT1-receptor antagonist valsartan, in the liver. Shows a pH-sensitive substrate specificity towards prostaglandin E2 and T4 which may be ascribed to the protonation state of the binding site and leads to a stimulation of substrate transport in an acidic microenvironment. Hydrogencarbonate/HCO3(-) acts as the probable counteranion that exchanges for organic anions. This chain is Solute carrier organic anion transporter family member 1B1 (SLCO1B1), found in Homo sapiens (Human).